Here is a 331-residue protein sequence, read N- to C-terminus: ATP-dependent 6-phosphofructokinase (331 aa).

ATP is bound at residue Gly-12. ADP contacts are provided by residues 22 to 26 and 55 to 60; these read RGVVR and RYSVSD. ATP contacts are provided by residues 73-74 and 103-106; these read RF and GDGS. Asp-104 lines the Mg(2+) pocket. Residue 127–129 participates in substrate binding; that stretch reads TID. Asp-129 acts as the Proton acceptor in catalysis. Residue Arg-156 participates in ADP binding. Substrate is bound by residues Arg-164 and 171–173; that span reads MGR. ADP contacts are provided by residues 187–189, Lys-213, and 215–217; these read GCE and KKH. Residues Glu-224, Arg-245, and 251-254 each bind substrate; that span reads HIQR.

This sequence belongs to the phosphofructokinase type A (PFKA) family. ATP-dependent PFK group I subfamily. Prokaryotic clade 'B1' sub-subfamily. As to quaternary structure, homotetramer. Mg(2+) serves as cofactor.

It is found in the cytoplasm. It carries out the reaction beta-D-fructose 6-phosphate + ATP = beta-D-fructose 1,6-bisphosphate + ADP + H(+). It participates in carbohydrate degradation; glycolysis; D-glyceraldehyde 3-phosphate and glycerone phosphate from D-glucose: step 3/4. With respect to regulation, allosterically activated by ADP and other diphosphonucleosides, and allosterically inhibited by phosphoenolpyruvate. Catalyzes the phosphorylation of D-fructose 6-phosphate to fructose 1,6-bisphosphate by ATP, the first committing step of glycolysis. The protein is ATP-dependent 6-phosphofructokinase of Yersinia enterocolitica serotype O:8 / biotype 1B (strain NCTC 13174 / 8081).